A 722-amino-acid chain; its full sequence is D-galactosyl-beta-1-&gt;4-L-rhamnose phosphorylase (722 aa).

The Proton donor role is filled by Asp-319.

This sequence belongs to the glycoside hydrolase 112 family.

It catalyses the reaction beta-D-galactosyl-(1-&gt;4)-L-rhamnose + phosphate = alpha-D-galactose 1-phosphate + L-rhamnopyranose. Its function is as follows. Reversibly phosphorolyzes beta-D-galactosyl-(1-&gt;4)-L-rhamnose to form alpha-D-galactose 1-phosphate and L-rhamnose. Does not phosphorolyze galacto-N-biose or lacto-N-biose. In the reverse reaction, has the highest activity toward L-rhamnose, also has activity toward L-mannose, and low activity toward L-lyxose, D-glucose, 2-deoxy-D-glucose and D-galactose. This Lachnoclostridium phytofermentans (strain ATCC 700394 / DSM 18823 / ISDg) (Clostridium phytofermentans) protein is D-galactosyl-beta-1-&gt;4-L-rhamnose phosphorylase.